We begin with the raw amino-acid sequence, 319 residues long: 4-hydroxy-3-methylbut-2-enyl diphosphate reductase (319 aa).

Cys-15 lines the [4Fe-4S] cluster pocket. The (2E)-4-hydroxy-3-methylbut-2-enyl diphosphate site is built by His-44 and His-77. 2 residues coordinate dimethylallyl diphosphate: His-44 and His-77. Positions 44 and 77 each coordinate isopentenyl diphosphate. Residue Cys-99 participates in [4Fe-4S] cluster binding. His-127 serves as a coordination point for (2E)-4-hydroxy-3-methylbut-2-enyl diphosphate. His-127 is a binding site for dimethylallyl diphosphate. Residue His-127 coordinates isopentenyl diphosphate. Catalysis depends on Glu-129, which acts as the Proton donor. Position 172 (Thr-172) interacts with (2E)-4-hydroxy-3-methylbut-2-enyl diphosphate. Cys-202 is a binding site for [4Fe-4S] cluster. (2E)-4-hydroxy-3-methylbut-2-enyl diphosphate contacts are provided by Ser-230, Ser-231, Asn-232, and Ser-274. 4 residues coordinate dimethylallyl diphosphate: Ser-230, Ser-231, Asn-232, and Ser-274. Isopentenyl diphosphate is bound by residues Ser-230, Ser-231, Asn-232, and Ser-274.

This sequence belongs to the IspH family. Requires [4Fe-4S] cluster as cofactor.

The enzyme catalyses isopentenyl diphosphate + 2 oxidized [2Fe-2S]-[ferredoxin] + H2O = (2E)-4-hydroxy-3-methylbut-2-enyl diphosphate + 2 reduced [2Fe-2S]-[ferredoxin] + 2 H(+). It carries out the reaction dimethylallyl diphosphate + 2 oxidized [2Fe-2S]-[ferredoxin] + H2O = (2E)-4-hydroxy-3-methylbut-2-enyl diphosphate + 2 reduced [2Fe-2S]-[ferredoxin] + 2 H(+). Its pathway is isoprenoid biosynthesis; dimethylallyl diphosphate biosynthesis; dimethylallyl diphosphate from (2E)-4-hydroxy-3-methylbutenyl diphosphate: step 1/1. The protein operates within isoprenoid biosynthesis; isopentenyl diphosphate biosynthesis via DXP pathway; isopentenyl diphosphate from 1-deoxy-D-xylulose 5-phosphate: step 6/6. In terms of biological role, catalyzes the conversion of 1-hydroxy-2-methyl-2-(E)-butenyl 4-diphosphate (HMBPP) into a mixture of isopentenyl diphosphate (IPP) and dimethylallyl diphosphate (DMAPP). Acts in the terminal step of the DOXP/MEP pathway for isoprenoid precursor biosynthesis. This is 4-hydroxy-3-methylbut-2-enyl diphosphate reductase from Xanthomonas euvesicatoria pv. vesicatoria (strain 85-10) (Xanthomonas campestris pv. vesicatoria).